Consider the following 329-residue polypeptide: DNA-directed RNA polymerase subunit alpha (329 aa).

The segment at 1–235 is alpha N-terminal domain (alpha-NTD); that stretch reads MQGSVTEFLK…EQLEAFVDLR (235 aa). The segment at 249–329 is alpha C-terminal domain (alpha-CTD); it reads FDPILLRPVD…NWPPASIADE (81 aa).

Belongs to the RNA polymerase alpha chain family. As to quaternary structure, homodimer. The RNAP catalytic core consists of 2 alpha, 1 beta, 1 beta' and 1 omega subunit. When a sigma factor is associated with the core the holoenzyme is formed, which can initiate transcription.

It carries out the reaction RNA(n) + a ribonucleoside 5'-triphosphate = RNA(n+1) + diphosphate. Functionally, DNA-dependent RNA polymerase catalyzes the transcription of DNA into RNA using the four ribonucleoside triphosphates as substrates. The sequence is that of DNA-directed RNA polymerase subunit alpha from Yersinia pestis bv. Antiqua (strain Antiqua).